The primary structure comprises 326 residues: Acetyl-coenzyme A carboxylase carboxyl transferase subunit alpha (326 aa).

One can recognise a CoA carboxyltransferase C-terminal domain in the interval 44 to 298 (KLETRAMQLR…KQALLDNLDE (255 aa)).

This sequence belongs to the AccA family. Acetyl-CoA carboxylase is a heterohexamer composed of biotin carboxyl carrier protein (AccB), biotin carboxylase (AccC) and two subunits each of ACCase subunit alpha (AccA) and ACCase subunit beta (AccD).

The protein localises to the cytoplasm. It catalyses the reaction N(6)-carboxybiotinyl-L-lysyl-[protein] + acetyl-CoA = N(6)-biotinyl-L-lysyl-[protein] + malonyl-CoA. Its pathway is lipid metabolism; malonyl-CoA biosynthesis; malonyl-CoA from acetyl-CoA: step 1/1. In terms of biological role, component of the acetyl coenzyme A carboxylase (ACC) complex. First, biotin carboxylase catalyzes the carboxylation of biotin on its carrier protein (BCCP) and then the CO(2) group is transferred by the carboxyltransferase to acetyl-CoA to form malonyl-CoA. The sequence is that of Acetyl-coenzyme A carboxylase carboxyl transferase subunit alpha from Nostoc sp. (strain PCC 7120 / SAG 25.82 / UTEX 2576).